The following is a 461-amino-acid chain: ATP-dependent protease ATPase subunit HslU (461 aa).

Residues I18 and 60–65 each bind ATP; that span reads GVGKTE. The segment at 157–178 is disordered; sequence EGSSVKPEPTAQQKESRQKMRK. Residues D273, E339, and R411 each contribute to the ATP site.

Belongs to the ClpX chaperone family. HslU subfamily. As to quaternary structure, a double ring-shaped homohexamer of HslV is capped on each side by a ring-shaped HslU homohexamer. The assembly of the HslU/HslV complex is dependent on binding of ATP.

The protein localises to the cytoplasm. Functionally, ATPase subunit of a proteasome-like degradation complex; this subunit has chaperone activity. The binding of ATP and its subsequent hydrolysis by HslU are essential for unfolding of protein substrates subsequently hydrolyzed by HslV. HslU recognizes the N-terminal part of its protein substrates and unfolds these before they are guided to HslV for hydrolysis. The protein is ATP-dependent protease ATPase subunit HslU of Magnetococcus marinus (strain ATCC BAA-1437 / JCM 17883 / MC-1).